Here is a 305-residue protein sequence, read N- to C-terminus: Homoserine O-succinyltransferase (305 aa).

C142 acts as the Acyl-thioester intermediate in catalysis. Residues K163 and S192 each coordinate substrate. The active-site Proton acceptor is H235. The active site involves E237. R249 contributes to the substrate binding site.

The protein belongs to the MetA family.

The protein resides in the cytoplasm. It catalyses the reaction L-homoserine + succinyl-CoA = O-succinyl-L-homoserine + CoA. It functions in the pathway amino-acid biosynthesis; L-methionine biosynthesis via de novo pathway; O-succinyl-L-homoserine from L-homoserine: step 1/1. Its function is as follows. Transfers a succinyl group from succinyl-CoA to L-homoserine, forming succinyl-L-homoserine. The polypeptide is Homoserine O-succinyltransferase (Psychromonas ingrahamii (strain DSM 17664 / CCUG 51855 / 37)).